The following is a 226-amino-acid chain: Isoprenyl transferase (226 aa).

Residue Asp12 is part of the active site. Position 12 (Asp12) interacts with Mg(2+). Residues 13–16 (GNAR), Trp17, Lys25, His29, and 57–59 (SSE) each bind substrate. Catalysis depends on Asn60, which acts as the Proton acceptor. Substrate contacts are provided by residues Trp61, Arg63, Arg174, and 180–182 (RIS). Residue Glu193 coordinates Mg(2+).

The protein belongs to the UPP synthase family. Homodimer. Requires Mg(2+) as cofactor.

Catalyzes the condensation of isopentenyl diphosphate (IPP) with allylic pyrophosphates generating different type of terpenoids. This is Isoprenyl transferase from Rickettsia typhi (strain ATCC VR-144 / Wilmington).